Consider the following 410-residue polypeptide: LIMR family protein SELMODRAFT_432208 (410 aa).

5 helical membrane-spanning segments follow: residues 30 to 50 (LWWA…IFFY), 67 to 87 (LWVV…YAVI), 129 to 149 (VTLM…LTTL), 156 to 176 (ICLD…NTII), and 179 to 199 (ILFM…LIFA). Residues 245–274 (RMFRKNVKKVQQELVFLEDDVEALNEAFPQ) are a coiled coil. 2 helical membrane passes run 288 to 308 (LVFG…IIVF) and 330 to 350 (GGLL…MSVI). Residues 389-400 (PSSAMDSSSWSA) show a composition bias toward low complexity. Residues 389 to 410 (PSSAMDSSSWSADRPCRPWPWP) form a disordered region.

The protein belongs to the LIMR family.

It localises to the membrane. The sequence is that of LIMR family protein SELMODRAFT_432208 from Selaginella moellendorffii (Spikemoss).